Reading from the N-terminus, the 290-residue chain is Nucleotide-binding protein XF_1405 (290 aa).

13 to 20 contacts ATP; it reads GLSGSGKS. A GTP-binding site is contributed by 65-68; the sequence is DIRS.

This sequence belongs to the RapZ-like family.

Displays ATPase and GTPase activities. The sequence is that of Nucleotide-binding protein XF_1405 from Xylella fastidiosa (strain 9a5c).